Consider the following 574-residue polypeptide: Glucose-6-phosphate 1-dehydrogenase, chloroplastic (574 aa).

Residues 93–100 (GASGDLAK) and Arg127 contribute to the NADP(+) site. A disulfide bridge connects residues Cys145 and Cys153. Lys230 contacts NADP(+). D-glucose 6-phosphate contacts are provided by residues Lys230, 260–264 (HYLGK), Glu298, and Asp317. Catalysis depends on His322, which acts as the Proton acceptor. Lys415 lines the NADP(+) pocket. D-glucose 6-phosphate contacts are provided by Lys418 and Lys423. NADP(+) contacts are provided by Arg424, Arg428, and Arg457. Gln459 serves as a coordination point for D-glucose 6-phosphate. NADP(+) is bound by residues 465-467 (YLK) and Arg550.

Belongs to the glucose-6-phosphate dehydrogenase family. As to quaternary structure, homodimer.

It is found in the plastid. The protein localises to the chloroplast. The enzyme catalyses D-glucose 6-phosphate + NADP(+) = 6-phospho-D-glucono-1,5-lactone + NADPH + H(+). Its pathway is carbohydrate degradation; pentose phosphate pathway; D-ribulose 5-phosphate from D-glucose 6-phosphate (oxidative stage): step 1/3. Regulated by metabolites. Post-translationally inactivated by cysteine-mediated redox modification via the ferredoxin-thioredoxin system in the light and this avoids futile cycles with photosynthetic CO2 fixation. In terms of biological role, catalyzes the rate-limiting step of the oxidative pentose-phosphate pathway, which represents a route for the dissimilation of carbohydrates besides glycolysis. The main function of this enzyme is to provide reducing power (NADPH) and pentose phosphates for fatty acid and nucleic acid synthesis which are involved in membrane synthesis and cell division. This is Glucose-6-phosphate 1-dehydrogenase, chloroplastic (G6PD) from Spinacia oleracea (Spinach).